The sequence spans 168 residues: Mitochondrial inner membrane protein SHH4 (168 aa).

A mitochondrion-targeting transit peptide spans 1 to 23; sequence MSSTKFLKPLCRIRAFHTSIARS. The Mitochondrial matrix segment spans residues 24–65; the sequence is FTIPFLPKIPQKPGGVSGTANDSSYMPPESRAQGSYHWIVER. The chain crosses the membrane as a helical span at residues 66–86; that stretch reads GLSLAVLPLIAVPLVTTGPIS. Topologically, residues 87–92 are mitochondrial intermembrane; that stretch reads TFTDTF. A helical membrane pass occupies residues 93-113; the sequence is LSLVLLGHCHIGFQSCIIDYI. Cysteine 101 lines the heme pocket. Tyrosine 112 contributes to the a ubiquinone binding site. Residues 114-120 lie on the Mitochondrial matrix side of the membrane; it reads SERVYGK. Residues 121–141 form a helical membrane-spanning segment; sequence VHHYAMYLLSLGSFLSFVGIY. The Mitochondrial intermembrane segment spans residues 142–168; it reads KLESQEAGLIASLKSLWDNKPVEKKRQ.

It belongs to the CybS family. Interacts with SDH3.

It is found in the mitochondrion inner membrane. Functionally, homolog of SDH4, but seems not to be a stoichiometric subunit of either the succinate dehydrogenase (SDH) complex or the mitochondrial inner membrane translocase TIM22 complex. The polypeptide is Mitochondrial inner membrane protein SHH4 (Saccharomyces cerevisiae (strain ATCC 204508 / S288c) (Baker's yeast)).